The chain runs to 502 residues: Protein Dok-7 (502 aa).

A PH domain is found at 4–109 (SVVVEGYARL…WDARLRYSLG (106 aa)). The region spanning 105–210 (RYSLGEVHRF…RGISPTRGPF (106 aa)) is the IRS-type PTB domain. Disordered regions lie at residues 210–232 (FGLRPVLPDPSTSETSSEERLNH), 249–279 (STASYCPSAGGDDRSISGSSDTSDTSHSDCS), 291–358 (TSIQ…GSFS), and 418–482 (EVGG…GHPG). Low complexity-rich tracts occupy residues 264-279 (ISGSSDTSDTSHSDCS) and 301-316 (AGAKAAAQSAEKPLPS). The segment covering 336 to 346 (GRQSSSDSGIA) has biased composition (polar residues). Positions 347-358 (TGSHSSYSGSFS) are enriched in low complexity. Residues 459-473 (PNEHFRSPSESKKSS) show a composition bias toward basic and acidic residues.

The protein localises to the cell membrane. The protein resides in the synapse. Probable muscle-intrinsic activator of MUSK that plays an essential role in neuromuscular synaptogenesis. Acts in aneural activation of MUSK and subsequent acetylcholine receptor (AchR) clustering in myotubes. The polypeptide is Protein Dok-7 (dok7) (Takifugu rubripes (Japanese pufferfish)).